The sequence spans 278 residues: Odontogenic ameloblast-associated protein (278 aa).

The signal sequence occupies residues 1–15 (MKIIILLGLIGATSS). Positions 103-124 (GGQAGQPDFSQQQTPSQTQQAS) are disordered. Over residues 107–124 (GQPDFSQQQTPSQTQQAS) the composition is skewed to low complexity. O-linked (GalNAc...) threonine glycans are attached at residues Thr116 and Thr120. Positions 126–128 (MSY) are interaction with ARHGEF5. Positions 230–278 (GFKQDNVGVSTPSTSPKPDTGNFFTSEINPTIAPLLPEQKVNADSLREP) are disordered. The segment covering 236–258 (VGVSTPSTSPKPDTGNFFTSEIN) has biased composition (polar residues). Thr240, Thr243, Thr249, and Thr254 each carry an O-linked (GalNAc...) threonine glycan.

This sequence belongs to the ODAM family. In terms of assembly, interacts (via C-terminus) with ARHGEF5. Post-translationally, O-glycosylated. Highly expressed in tooth-associated epithelia. In tooth, it is only detected in the ameloblast layer of the enamel organ, starting at post-secretory transition and extending throughout the maturation stage. Also detected in epithelial cells of the gingiva which bind it to the tooth surface (junctional epithelium) (at protein level). Predominantly expressed in mandible, but also expressed at weak level in nasal and salivary glands, and at much lower level in epididymis.

The protein resides in the secreted. It localises to the cytoplasm. It is found in the nucleus. Its function is as follows. Tooth-associated epithelia protein that probably plays a role in odontogenesis, the complex process that results in the initiation and generation of the tooth. May be incorporated in the enamel matrix at the end of mineralization process. Involved in the induction of RHOA activity via interaction with ARHGEF and expression of downstream factors such as ROCK. Plays a role in attachment of the junctional epithelium to the tooth surface. In Rattus norvegicus (Rat), this protein is Odontogenic ameloblast-associated protein (Odam).